The chain runs to 453 residues: uncharacterized protein (453 aa).

Topologically, residues 1–110 (MIQTQSTAIK…KAILRTFNHP (110 aa)) are cytoplasmic. A helical transmembrane segment spans residues 111 to 131 (IALTELQFLVSAVLCVGFASI). Residues 132–172 (VNLFRLPRLKHTKFSKALNSFPDGILPEYLDGNFRSSILHK) lie on the Lumenal side of the membrane. A helical membrane pass occupies residues 173 to 193 (FLVPSKLVLMTTFPMGIFQFI). Residues 194 to 201 (GHITSHKA) are Cytoplasmic-facing. A helical membrane pass occupies residues 202 to 222 (VSMIPVSLVHSVKALSPIITV). The Lumenal portion of the chain corresponds to 223–234 (GYYKFFEHRYYN). The chain crosses the membrane as a helical span at residues 235–255 (SMTYYTLLLLIFGVMTTCWST). Residues 256–269 (HGSKRASDNKSGSS) are Cytoplasmic-facing. Residues 270-290 (LIGLLFAFISMIIFVAQNIFA) traverse the membrane as a helical segment. Residues 291-332 (KNILTIRRKVGILPSSSTDDVTSKEGQPSLDKTRFSPLQVDK) lie on the Lumenal side of the membrane. Residues 333–353 (ITILFYCSCIGFSLTLLPFLT) traverse the membrane as a helical segment. Residues 354-371 (GELMHGGSVINDLTLETV) lie on the Cytoplasmic side of the membrane. Residues 372-392 (ALVAIHGIAHFFQAMLAFQLI) form a helical membrane-spanning segment. Over 393-413 (GLLSSINYSVANIMKRIVVIS) the chain is Lumenal. Residues 414-434 (VALFWETKLNFFQVFGVILTI) traverse the membrane as a helical segment. Over 435-453 (AGLYGYDKWGLSKKDGRQA) the chain is Cytoplasmic.

It belongs to the TPT transporter family.

It is found in the membrane. In terms of biological role, able to suppress the functional loss of YPT1. May form a channel. Protein SLY41 is not essential for cell viability. The SLY41 gene is a multicopy suppressor. This is an uncharacterized protein from Saccharomyces cerevisiae (strain ATCC 204508 / S288c) (Baker's yeast).